The chain runs to 308 residues: MMHIKSLPHAHAAATAMSSNCDIVIVAAQPQTTIANNNNNETVTQATHPAHMAAVQQQQQQQQQQQQQHHQQQQQQSSGPPSVPPPPTELPLPFQMHLSGISAEAHSAAQAAAMAAAQAAAAQAAAAEQQQPPPPTSHLTHLTTHSPTTIHSEHYLANGHSEHPGEGNAAVGVGGAVREPEKPFHCTVCDRRFRQLSTLTNHVKIHTGEKPYKCNVCDKTFRQSSTLTNHLKIHTGEKPYNCNFCPKHFRQLSTLANHVKIHTGEKPFECVICKKQFRQSSTLNNHIKIHVMDKVYVPVKIKTEEDEG.

Disordered regions lie at residues 50–94 (AHMA…PLPF) and 123–143 (QAAAAEQQQPPPPTSHLTHLT). The span at 56–76 (QQQQQQQQQQQQQHHQQQQQQ) shows a compositional bias: low complexity. Pro residues predominate over residues 81-90 (PSVPPPPTEL). 4 C2H2-type zinc fingers span residues 184-206 (FHCTVCDRRFRQLSTLTNHVKIH), 212-234 (YKCNVCDKTFRQSSTLTNHLKIH), 240-262 (YNCNFCPKHFRQLSTLANHVKIH), and 268-290 (FECVICKKQFRQSSTLNNHIKIH).

Found in all tissues examined including the ovary and the fat body.

It is found in the nucleus. Functionally, transcriptional repressor that binds specifically to fat body-specific enhancers, namely the adult ADH enhancer (AAE) and the enhancer that controls yolk protein gene expression. The chain is Adult enhancer factor 1 (Aef1) from Drosophila melanogaster (Fruit fly).